A 351-amino-acid chain; its full sequence is F-box protein At1g70590 (351 aa).

The interval 1–60 is disordered; it reads MKQRTWPCRSEGSRFSSLSFLKPHDKDKRSRISSINKATAKSTTSSRSSSSSSSSRPPSN. A compositionally biased stretch (polar residues) spans 32-41; sequence ISSINKATAK. Residues 42–59 show a composition bias toward low complexity; the sequence is STTSSRSSSSSSSSRPPS. The region spanning 62–111 is the F-box domain; it reads FGDFSMLPYDILMKIAAPFSHPNLQAASLVCKSWRDALKPLRESMLLIRW. The stretch at 105 to 141 is one Sel1-like repeat; it reads SMLLIRWGKKYKHGRGGVRANLDKALDSFLKGAMRGS. The stretch at 142-175 is one TPR repeat; the sequence is TLAMVDAGLVYWERGEKEKAVNLYRRASELGDAV.

This chain is F-box protein At1g70590, found in Arabidopsis thaliana (Mouse-ear cress).